Consider the following 209-residue polypeptide: LexA repressor (209 aa).

The H-T-H motif DNA-binding region spans 30–50 (RVEIAREIGFKSPNAAEEHLK). Catalysis depends on for autocatalytic cleavage activity residues Ser126 and Lys163.

It belongs to the peptidase S24 family. In terms of assembly, homodimer.

It carries out the reaction Hydrolysis of Ala-|-Gly bond in repressor LexA.. Represses a number of genes involved in the response to DNA damage (SOS response), including recA and lexA. In the presence of single-stranded DNA, RecA interacts with LexA causing an autocatalytic cleavage which disrupts the DNA-binding part of LexA, leading to derepression of the SOS regulon and eventually DNA repair. The chain is LexA repressor from Glaesserella parasuis serovar 5 (strain SH0165) (Haemophilus parasuis).